We begin with the raw amino-acid sequence, 969 residues long: MMDFLKRFFGSSQERILKRFQKLVEEVNACDEKFSSLSDDELREKTPQLKQRYQDGESLDKLLPEAYGVVKNVCRRLAGTPVEVSGYHQQWDMVPYDVQILGAIAMHKGFITEMQTGEGKTLTAVMPLYLNALTGKPVHLVTVNDYLAQRDCEWVGSVLRWLGLTTGVLVSGSPPEKRKAIYQCDVVYGTASEFGFDYLRDNSIATRKEEQVGRGFYFAIIDEIDSVLIDEARTPLIISGPGEKHNPVYFELKDRVAELVYFQREMCNHIAIEARKVLDPFLGTDVLPKDKKVMEAISEACRALWLVSKGMPLNRVLRRVREHPDLRAMIDKWDVFYHAEQNKEECLEKLSSLYIVVDEHNNDFELTDKGMLQWIEKIGGAAEDFVMMDMGHEYALIEEDATLSPADKLNRKIAVSEKDTQRKARAHGLRQLLRAHLLMEKDIDYIVRDDQIVIIDEHTGRPQPGRRFSEGLHQAIEAKEHVTIRKESQTFATVTLQNFFRLYEKLAGMTGTAITESREFKEIYSLYVLQVPTFKPCLRIDHNDAFYMTEREKYQAIVAEIISAHRSGKPILIGTESVEVSEKLSRILRQNRINHTVLNAKNHAQEAEIIAGAGKVGAVTVATNMAGRGTDIKLDEEAVAAGGLYVIGTSRHQSRRIDRQLRGRCARLGDPGAAKFFLSFEDRLMRLFASPKLNTLIRHFRPPEGEAMSDPMFDRLIETAQKRVEGRNYTIRKHTLEYDDVMNKQRQTIYAFRNDVLHAEDLFVVAKEQIEHVALALAFLILKDAHADHCSLPKIEEWLSYSFPVKLDDQEIRRLGDVDAVADYIGDLLIEAFDVKFSAMLAEFTEIIGSAANAQGICNDILRSVIISHIDEEWKVHLVDMDLLRSEVGLRSVGQKDPLIEFKNESFLLFEGLIRDIRIAIVKHLFALELSLTRSDRPDNAIPTVATAFHNHDNFRPMELTIVGEEEES.

Residues Gln-99, 117–121 (GEGKT), and Asp-631 each bind ATP.

Belongs to the SecA family. As to quaternary structure, monomer and homodimer. Part of the essential Sec protein translocation apparatus which comprises SecA, SecYEG and auxiliary proteins SecDF. Other proteins may also be involved.

The protein resides in the cell inner membrane. Its subcellular location is the cytoplasm. It catalyses the reaction ATP + H2O + cellular proteinSide 1 = ADP + phosphate + cellular proteinSide 2.. In terms of biological role, part of the Sec protein translocase complex. Interacts with the SecYEG preprotein conducting channel. Has a central role in coupling the hydrolysis of ATP to the transfer of proteins into and across the cell membrane, serving as an ATP-driven molecular motor driving the stepwise translocation of polypeptide chains across the membrane. This Chlamydia trachomatis serovar L2 (strain ATCC VR-902B / DSM 19102 / 434/Bu) protein is Protein translocase subunit SecA.